The sequence spans 785 residues: Tripartite terminase subunit 1 (785 aa).

The C3H1-type zinc-finger motif lies at 201–229 (CAVCFEELCVTANQGATIARRLADRICNH). Positions 439 to 487 (GGATGGAEEEEPRAAAEEGGRRRGAGTPASEDGERGPEPGAQGPESWGD) are disordered. Basic and acidic residues predominate over residues 450–459 (PRAAAEEGGR). An ATP-binding site is contributed by 696 to 703 (FASVYRCG).

This sequence belongs to the herpesviridae TRM1 protein family. In terms of assembly, associates with TRM2 and TRM3 to form the tripartite terminase complex. Interacts with portal protein.

The protein localises to the host nucleus. Its function is as follows. Component of the molecular motor that translocates viral genomic DNA in empty capsid during DNA packaging. Forms a tripartite terminase complex together with TRM2 and TRM3 in the host cytoplasm. Once the complex reaches the host nucleus, it interacts with the capsid portal vertex. This portal forms a ring in which genomic DNA is translocated into the capsid. TRM1 carries an endonuclease activity that plays an important role for the cleavage of concatemeric viral DNA into unit length genomes. In Human herpesvirus 2 (strain HG52) (HHV-2), this protein is Tripartite terminase subunit 1.